A 356-amino-acid chain; its full sequence is Cobalt-precorrin-5B C(1)-methyltransferase (356 aa).

The protein belongs to the CbiD family.

It carries out the reaction Co-precorrin-5B + S-adenosyl-L-methionine = Co-precorrin-6A + S-adenosyl-L-homocysteine. The protein operates within cofactor biosynthesis; adenosylcobalamin biosynthesis; cob(II)yrinate a,c-diamide from sirohydrochlorin (anaerobic route): step 6/10. Functionally, catalyzes the methylation of C-1 in cobalt-precorrin-5B to form cobalt-precorrin-6A. The polypeptide is Cobalt-precorrin-5B C(1)-methyltransferase (Citrifermentans bemidjiense (strain ATCC BAA-1014 / DSM 16622 / JCM 12645 / Bem) (Geobacter bemidjiensis)).